A 308-amino-acid chain; its full sequence is Probable very-long-chain enoyl-CoA reductase art-1 (308 aa).

Residues 7–85 (VYDAKRTDNL…VLYVRDLGPQ (79 aa)) form the Ubiquitin-like domain. A run of 4 helical transmembrane segments spans residues 112–132 (FIYG…IAFF), 169–189 (WGFA…PPAF), 194–214 (VYFG…IHIL), and 255–275 (WIFF…TAGF).

Belongs to the steroid 5-alpha reductase family.

Its subcellular location is the endoplasmic reticulum membrane. The catalysed reaction is a very-long-chain 2,3-saturated fatty acyl-CoA + NADP(+) = a very-long-chain (2E)-enoyl-CoA + NADPH + H(+). Its pathway is lipid metabolism; fatty acid biosynthesis. Catalyzes the last of the four reactions of the long-chain fatty acids elongation cycle. This endoplasmic reticulum-bound enzymatic process, allows the addition of 2 carbons to the chain of long- and very long-chain fatty acids/VLCFAs per cycle. This enzyme reduces the trans-2,3-enoyl-CoA fatty acid intermediate to an acyl-CoA that can be further elongated by entering a new cycle of elongation. Thereby, it participates in the production of VLCFAs of different chain lengths that are involved in multiple biological processes as precursors of membrane lipids and lipid mediators. This chain is Probable very-long-chain enoyl-CoA reductase art-1 (art-1), found in Caenorhabditis elegans.